The following is a 459-amino-acid chain: MIVFGSKAEIHAKSILKDGEIPKRWYNILPDLPEPLSPPLDPETNETINPEKLTRIFAKELIKQEFSEKRYIKIPKEVRELYAKIGRPTPLFRATNLEKILKTPARIYFKYEGATVTGSHKINTALAQAYYAKKEGIKRLVTETGAGQWGTALSLAGALIGLKVRVYMTRASYYQKPYRKILMEIYGAEVFPSPSENTEVGKRFLREDPNHPGSLGIAISEAIEDVLSDEKARYSLGSVLNHVLMHQTVIGLEAKKQVKEFEEPDVIIGCVGGGSNFAGLSYPFIKDVLDGKAEYEFIAVEPRAVPTMTKGVYTYDYGDSAGLTPKIKMYTLGHTYYVPPIHAGGLRYHGLAPTLSVLMNHGIVKPMAYHQTEVFEAAVLFAKAEGIVPAPESAHAVRAVIDKALEAKRKGEETVILFNLSGHGLLDLKGYEDYLEGKLEDYEPQILNLSMAPRPPNAL.

Lysine 121 is subject to N6-(pyridoxal phosphate)lysine.

The protein belongs to the TrpB family. As to quaternary structure, tetramer of two alpha and two beta chains. Pyridoxal 5'-phosphate is required as a cofactor.

The catalysed reaction is (1S,2R)-1-C-(indol-3-yl)glycerol 3-phosphate + L-serine = D-glyceraldehyde 3-phosphate + L-tryptophan + H2O. Its pathway is amino-acid biosynthesis; L-tryptophan biosynthesis; L-tryptophan from chorismate: step 5/5. In terms of biological role, the beta subunit is responsible for the synthesis of L-tryptophan from indole and L-serine. The polypeptide is Tryptophan synthase beta chain (trpB) (Pyrococcus horikoshii (strain ATCC 700860 / DSM 12428 / JCM 9974 / NBRC 100139 / OT-3)).